Here is a 499-residue protein sequence, read N- to C-terminus: Guanosine-5'-triphosphate,3'-diphosphate pyrophosphatase (499 aa).

This sequence belongs to the GppA/Ppx family. GppA subfamily.

The catalysed reaction is guanosine 3'-diphosphate 5'-triphosphate + H2O = guanosine 3',5'-bis(diphosphate) + phosphate + H(+). It participates in purine metabolism; ppGpp biosynthesis; ppGpp from GTP: step 2/2. Catalyzes the conversion of pppGpp to ppGpp. Guanosine pentaphosphate (pppGpp) is a cytoplasmic signaling molecule which together with ppGpp controls the 'stringent response', an adaptive process that allows bacteria to respond to amino acid starvation, resulting in the coordinated regulation of numerous cellular activities. This Klebsiella pneumoniae subsp. pneumoniae (strain ATCC 700721 / MGH 78578) protein is Guanosine-5'-triphosphate,3'-diphosphate pyrophosphatase.